Reading from the N-terminus, the 665-residue chain is Zinc finger CCCH domain-containing protein 45 (665 aa).

Positions 1–55 (MDDGDLSFDFEGGLDQPPAGGGGGPAPHSSDPGGVGGGGGGGGPGDGGGHGRGRG) are disordered. The segment covering 33–50 (GGVGGGGGGGGPGDGGGH) has biased composition (gly residues). 3 C3H1-type zinc fingers span residues 58–85 (SYRQ…HQFD), 86–113 (KARM…HSYD), and 114–139 (DVKE…HVKL). A disordered region spans residues 167-256 (HNNYNQQGER…QATRIATPLP (90 aa)). The segment covering 169–200 (NYNQQGERPQHPQGSGLPNQNSIDNTTTTTAQ) has biased composition (polar residues). Positions 205 to 238 (QQAQTTNQQPPQQQQQQQQQQQQQQKPNTNDQVQ) are enriched in low complexity. Positions 239–250 (SVPNGSSNQATR) are enriched in polar residues. Positions 260–395 (SRYFIVKSCN…FIGEQLASLL (136 aa)) constitute a YTH domain. The stretch at 432-459 (DIVLFDDNEEEEEEESEEEEEGNGQESQ) forms a coiled coil. Over residues 439–454 (NEEEEEEESEEEEEGN) the composition is skewed to acidic residues. Disordered regions lie at residues 439–469 (NEEE…GMMW) and 561–665 (GPLM…SRKR). Residues 561–573 (GPLMGGLGMGGPG) are compositionally biased toward gly residues. Positions 596-623 (TKREQRRPGGERGDRYETTSDQGSRGHD) are enriched in basic and acidic residues.

The polypeptide is Zinc finger CCCH domain-containing protein 45 (Oryza sativa subsp. japonica (Rice)).